We begin with the raw amino-acid sequence, 512 residues long: Beta-glucosidase 44 (512 aa).

The N-terminal stretch at 1–23 (MRHLSSPPWPLLLLLLLSSFTSG) is a signal peptide. Glutamine 58 serves as a coordination point for a beta-D-glucoside. N-linked (GlcNAc...) asparagine glycosylation occurs at asparagine 86. Residues histidine 159 and 204–205 (NE) each bind a beta-D-glucoside. Glutamate 205 (proton donor) is an active-site residue. Cysteine 224 and cysteine 231 are disulfide-bonded. Asparagine 230 carries N-linked (GlcNAc...) asparagine glycosylation. Tyrosine 347 and glutamate 419 together coordinate a beta-D-glucoside. Glutamate 419 functions as the Nucleophile in the catalytic mechanism. A glycan (N-linked (GlcNAc...) asparagine) is linked at asparagine 427. Residues tryptophan 466, 473-474 (EW), and phenylalanine 482 each bind a beta-D-glucoside.

It belongs to the glycosyl hydrolase 1 family. As to quaternary structure, homodimer.

It is found in the secreted. The enzyme catalyses Hydrolysis of terminal, non-reducing beta-D-glucosyl residues with release of beta-D-glucose.. In terms of biological role, hydrolyzes p-nitrophenyl beta-D-glucoside, p-nitrophenyl beta-D-mannoside, cellobiose, 4-methylumbelliferyl-beta-D-glucoside, laminarin, amygdalin, esculin and gentiobiose. The polypeptide is Beta-glucosidase 44 (Arabidopsis thaliana (Mouse-ear cress)).